Reading from the N-terminus, the 395-residue chain is MGKEKFDRSKPHVNVGTIGHVDHGKTTLTAAISAVLSKAQGKAATKFDQIDGAPEERERGITIATAHIEYETDKRHYAHVDCPGHADYVKNMITGAAQMDGAILVVSATDGPMPQTREHILLSRQVGVPYIVVFMNKVDMVDDEELLELVEMEIRELLSEYDFPGDDLPVIKGSALGALNGEAQWEEKVMELMNAVDEYIPEPVRDTEKDFMMPVEDVFSITGRGTVATGRVERGVLRVNDEIEIVGLTEETKKTVCTGVEMFRKLLDYAEAGDNIGALLRGVSRDDIERGQVLAKPGSITPHSKFKASIYVLSKEEGGRHTPFFANYRPQFYFRTTDVTGIVHLPEGTEMVMPGDNIELTIELISTIAIEDGTRFSIREGGRTVGAGSVTEIIE.

One can recognise a tr-type G domain in the interval 10-204 (KPHVNVGTIG…AVDEYIPEPV (195 aa)). A G1 region spans residues 19 to 26 (GHVDHGKT). 19-26 (GHVDHGKT) is a GTP binding site. A Mg(2+)-binding site is contributed by T26. The G2 stretch occupies residues 60–64 (GITIA). A G3 region spans residues 81-84 (DCPG). GTP is bound by residues 81-85 (DCPGH) and 136-139 (NKVD). Residues 136 to 139 (NKVD) are G4. A G5 region spans residues 174–176 (SAL).

Belongs to the TRAFAC class translation factor GTPase superfamily. Classic translation factor GTPase family. EF-Tu/EF-1A subfamily. Monomer.

It is found in the cytoplasm. The enzyme catalyses GTP + H2O = GDP + phosphate + H(+). Functionally, GTP hydrolase that promotes the GTP-dependent binding of aminoacyl-tRNA to the A-site of ribosomes during protein biosynthesis. The chain is Elongation factor Tu from Exiguobacterium sp. (strain ATCC BAA-1283 / AT1b).